Consider the following 120-residue polypeptide: Non-specific lipid-transfer protein (120 aa).

The first 26 residues, 1–26, serve as a signal peptide directing secretion; it reads MGVLRSSFVAMMVMYMVLATTPNAEA. 4 disulfide bridges follow: Cys30/Cys79, Cys40/Cys56, Cys57/Cys102, and Cys77/Cys116.

It belongs to the plant LTP family. As to expression, expressed in protoderm cells of somatic and zygotic embryos, and transiently expressed in epidermal cell layers of leaves, flowers and seeds.

Its function is as follows. Plant non-specific lipid-transfer proteins transfer phospholipids as well as galactolipids across membranes. May play a role in wax or cutin deposition in the cell walls of expanding epidermal cells and certain secretory tissues. The chain is Non-specific lipid-transfer protein (EP2) from Daucus carota (Wild carrot).